Reading from the N-terminus, the 160-residue chain is Transcriptional regulator MraZ (160 aa).

2 SpoVT-AbrB domains span residues Lys5–Val50 and Ala93–Val136.

Belongs to the MraZ family. Forms oligomers.

The protein resides in the cytoplasm. Its subcellular location is the nucleoid. In Geobacter sp. (strain M21), this protein is Transcriptional regulator MraZ.